Here is a 602-residue protein sequence, read N- to C-terminus: Potassium-transporting ATPase potassium-binding subunit (602 aa).

Helical transmembrane passes span 3-23, 64-84, 135-155, 178-198, 282-302, 313-333, 418-438, 456-476, 522-542, and 565-585; these read ANNL…AVPV, QYAL…YALL, GLTV…LALI, LYVL…QGVI, FSNF…CLVF, VAVL…ETSA, GLYG…LMIG, VSIV…IAVL, WMTA…VLAI, and LFVV…YMPA.

The protein belongs to the KdpA family. As to quaternary structure, the system is composed of three essential subunits: KdpA, KdpB and KdpC.

The protein resides in the cell inner membrane. In terms of biological role, part of the high-affinity ATP-driven potassium transport (or Kdp) system, which catalyzes the hydrolysis of ATP coupled with the electrogenic transport of potassium into the cytoplasm. This subunit binds the periplasmic potassium ions and delivers the ions to the membrane domain of KdpB through an intramembrane tunnel. In Burkholderia mallei (strain ATCC 23344), this protein is Potassium-transporting ATPase potassium-binding subunit.